Reading from the N-terminus, the 379-residue chain is Sialidase-2 (379 aa).

Residues 20–23 carry the FRIP motif motif; that stretch reads YRIP. The substrate site is built by Arg-21 and Arg-41. Residue Asp-46 is the Proton acceptor of the active site. Residues 127-138 form a BNR 1 repeat; that stretch reads VSSTDHGRTWSP. The substrate site is built by Tyr-179 and Tyr-181. The BNR 2 repeat unit spans residues 197 to 208; the sequence is FISLDHGHTWKL. Substrate is bound by residues Glu-218, Arg-237, and Arg-303. Arg-303 is a catalytic residue. Catalysis depends on Tyr-333, which acts as the Nucleophile. Glu-354 is an active-site residue.

Belongs to the glycosyl hydrolase 33 family. As to expression, highly expressed in heart.

It is found in the cytoplasm. The protein resides in the cytosol. The catalysed reaction is Hydrolysis of alpha-(2-&gt;3)-, alpha-(2-&gt;6)-, alpha-(2-&gt;8)- glycosidic linkages of terminal sialic acid residues in oligosaccharides, glycoproteins, glycolipids, colominic acid and synthetic substrates.. It catalyses the reaction a ganglioside GD1a + H2O = a ganglioside GM1 + N-acetylneuraminate. The enzyme catalyses a ganglioside GM1 + H2O = a ganglioside GA1 + N-acetylneuraminate. It carries out the reaction a ganglioside GT1b + H2O = a ganglioside GD1b + N-acetylneuraminate. The catalysed reaction is a ganglioside GD1b + H2O = a ganglioside GM1 + N-acetylneuraminate. It catalyses the reaction a ganglioside GD3 + H2O = a ganglioside GM3 + N-acetylneuraminate. The enzyme catalyses a ganglioside GM3 + H2O = a beta-D-galactosyl-(1-&gt;4)-beta-D-glucosyl-(1&lt;-&gt;1)-ceramide + N-acetylneuraminate. It carries out the reaction a ganglioside GM2 + H2O = a ganglioside GA2 + N-acetylneuraminate. The catalysed reaction is a neolactoside IV(3)-alpha-NeuAc-nLc4Cer(d18:1(4E)) + H2O = a neolactoside nLc4Cer(d18:1(4E)) + N-acetylneuraminate. It catalyses the reaction N-acetyl-alpha-neuraminosyl-(2-&gt;3)-beta-D-galactosyl-(1-&gt;4)-D-glucose + H2O = lactose + N-acetylneuraminate. Functionally, exo-alpha-sialidase that catalyzes the hydrolytic cleavage of the terminal sialic acid (N-acetylneuraminic acid, Neu5Ac) of a glycan moiety in the catabolism of glycolipids, glycoproteins and oligosacharides. Recognizes sialyl linkage positions of the glycan moiety as well as the supramolecular organization of the sialoglycoconjugate. Displays preference for alpha-(2-&gt;3)-sialylated GD1a and GT1B gangliosides over alpha-(2-&gt;8)-sialylated GD1b, in both monomeric forms and micelles. Hydrolyzes exclusively monomeric GM1 ganglioside, but has no activity toward the miscellar form. Has lower sialidase activity for glycoproteins such as fetuin and TF/transferrin that carry a mixture of alpha-(2-&gt;3) and alpha-(2-&gt;6)-sialyl linkages. Cleaves milk oligosaccharide alpha-(2-&gt;3)-sialyllactose, but is inactive toward isomer alpha-(2-&gt;6)-sialyllactose isomer. Has no activity toward colominic acid, a homomer of alpha-(2-&gt;8)-linked Neu5Ac residues. In Mus musculus (Mouse), this protein is Sialidase-2 (Neu2).